The primary structure comprises 1485 residues: Putative E3 ubiquitin-protein ligase LIN-2 (1485 aa).

Residues 337–353 (EENEDDSDSELDNESVD) show a composition bias toward acidic residues. Disordered stretches follow at residues 337-363 (EENE…IFSP), 384-450 (NQIP…ISNA), and 462-507 (RKND…KLSM). Low complexity predominate over residues 438-450 (SSPDISIDNISNA). The segment covering 466–484 (SQTPSMNQDNENSLVLNDS) has biased composition (polar residues). Positions 510–585 (KPPKDFVCPI…TSWKEQNPEL (76 aa)) constitute a U-box domain. WD repeat units lie at residues 1194 to 1232 (SCKE…KVCD), 1246 to 1283 (EHTK…IKCI), 1409 to 1448 (SLST…RVAS), and 1454 to 1485 (GHTK…WALD).

It carries out the reaction S-ubiquitinyl-[E2 ubiquitin-conjugating enzyme]-L-cysteine + [acceptor protein]-L-lysine = [E2 ubiquitin-conjugating enzyme]-L-cysteine + N(6)-ubiquitinyl-[acceptor protein]-L-lysine.. It participates in protein modification; protein ubiquitination. In terms of biological role, putative E3 ubiquitin-protein ligase involved in the rhizobial infection process. Plays an important role in the early steps of infection thread formation and in growth and differentiation of nodules. In Lotus japonicus (Lotus corniculatus var. japonicus), this protein is Putative E3 ubiquitin-protein ligase LIN-2.